A 448-amino-acid polypeptide reads, in one-letter code: Probable glycine dehydrogenase (decarboxylating) subunit 1 (448 aa).

Belongs to the GcvP family. N-terminal subunit subfamily. The glycine cleavage system is composed of four proteins: P, T, L and H. In this organism, the P 'protein' is a heterodimer of two subunits.

The enzyme catalyses N(6)-[(R)-lipoyl]-L-lysyl-[glycine-cleavage complex H protein] + glycine + H(+) = N(6)-[(R)-S(8)-aminomethyldihydrolipoyl]-L-lysyl-[glycine-cleavage complex H protein] + CO2. The glycine cleavage system catalyzes the degradation of glycine. The P protein binds the alpha-amino group of glycine through its pyridoxal phosphate cofactor; CO(2) is released and the remaining methylamine moiety is then transferred to the lipoamide cofactor of the H protein. This Pyrococcus furiosus (strain ATCC 43587 / DSM 3638 / JCM 8422 / Vc1) protein is Probable glycine dehydrogenase (decarboxylating) subunit 1.